Reading from the N-terminus, the 313-residue chain is MKLIRGIHNLSQAPQEGCVLTIGNFDGVHRGHRALLQGLQEEGRKRNLPVMVMLFEPQPLELFATDKAPARLTRLREKLRYLAECGVDYVLCVRFDRRFAALTAQNFISDLLVKHLRVKFLAVGDDFRFGAGREGDFLLLQKAGMEYGFDITSTQTFCEGGVRISSTAVRQALADDNLALAESLLGHPFAISGRVVHGDELGRTIGFPTANVPLRRQVSPVKGVYAVEVLGLGEKPLPGVANIGTRPTVAGIRQQLEVHLLDVAMDLYGRHIQVVLRKKIRNEQRFASLDELKAQIARDELTAREFFGLTKPA.

This sequence belongs to the RibF family.

The catalysed reaction is riboflavin + ATP = FMN + ADP + H(+). The enzyme catalyses FMN + ATP + H(+) = FAD + diphosphate. It participates in cofactor biosynthesis; FAD biosynthesis; FAD from FMN: step 1/1. Its pathway is cofactor biosynthesis; FMN biosynthesis; FMN from riboflavin (ATP route): step 1/1. Catalyzes the phosphorylation of riboflavin to FMN followed by the adenylation of FMN to FAD. This is Bifunctional riboflavin kinase/FMN adenylyltransferase (ribF) from Escherichia coli O157:H7.